The primary structure comprises 430 residues: Protein translocase subunit SecY (430 aa).

A run of 10 helical transmembrane segments spans residues 18–38 (IFFT…PAPG), 68–88 (FSIF…MQLL), 117–137 (FAII…NNYL), 147–167 (VMSY…LIWL), 174–194 (FGVG…TLPS), 217–237 (ILGL…VLEA), 270–290 (VIPV…TLFF), 308–328 (NIGM…YAFV), 368–388 (FVGS…TKFM), and 389–409 (GLPQ…GVAI).

This sequence belongs to the SecY/SEC61-alpha family. As to quaternary structure, component of the Sec protein translocase complex. Heterotrimer consisting of SecY, SecE and SecG subunits. The heterotrimers can form oligomers, although 1 heterotrimer is thought to be able to translocate proteins. Interacts with the ribosome. Interacts with SecDF, and other proteins may be involved. Interacts with SecA.

It is found in the cell membrane. The central subunit of the protein translocation channel SecYEG. Consists of two halves formed by TMs 1-5 and 6-10. These two domains form a lateral gate at the front which open onto the bilayer between TMs 2 and 7, and are clamped together by SecE at the back. The channel is closed by both a pore ring composed of hydrophobic SecY resides and a short helix (helix 2A) on the extracellular side of the membrane which forms a plug. The plug probably moves laterally to allow the channel to open. The ring and the pore may move independently. This chain is Protein translocase subunit SecY, found in Staphylococcus epidermidis (strain ATCC 35984 / DSM 28319 / BCRC 17069 / CCUG 31568 / BM 3577 / RP62A).